A 271-amino-acid polypeptide reads, in one-letter code: 2-dehydro-3-deoxyphosphooctonate aldolase (271 aa).

Belongs to the KdsA family.

It is found in the cytoplasm. The catalysed reaction is D-arabinose 5-phosphate + phosphoenolpyruvate + H2O = 3-deoxy-alpha-D-manno-2-octulosonate-8-phosphate + phosphate. It functions in the pathway carbohydrate biosynthesis; 3-deoxy-D-manno-octulosonate biosynthesis; 3-deoxy-D-manno-octulosonate from D-ribulose 5-phosphate: step 2/3. It participates in bacterial outer membrane biogenesis; lipopolysaccharide biosynthesis. The sequence is that of 2-dehydro-3-deoxyphosphooctonate aldolase from Campylobacter jejuni subsp. jejuni serotype O:23/36 (strain 81-176).